The chain runs to 348 residues: Probable purine nucleoside permease C285.05 (348 aa).

The N-terminal stretch at 1–21 is a signal peptide; it reads MLFLKLVASVLALMTIVPAQA.

It belongs to the NUP family.

Its subcellular location is the endoplasmic reticulum. Its function is as follows. Probable nucleoside permease that transports adenosine and guanosine. This is Probable purine nucleoside permease C285.05 from Schizosaccharomyces pombe (strain 972 / ATCC 24843) (Fission yeast).